The sequence spans 443 residues: Ribosomal protein uS12 methylthiotransferase RimO (443 aa).

The MTTase N-terminal domain occupies 5-116; the sequence is PSVAVAHLGC…IVDVIQRAEA (112 aa). [4Fe-4S] cluster-binding residues include cysteine 14, cysteine 50, cysteine 79, cysteine 154, cysteine 158, and cysteine 161. Residues 140-370 enclose the Radical SAM core domain; the sequence is TTTEGTAYVR…ALQQPISWQQ (231 aa). The TRAM domain occupies 372-442; sequence QQEVGKTVQV…AYDLQGQLVS (71 aa).

It belongs to the methylthiotransferase family. RimO subfamily. [4Fe-4S] cluster is required as a cofactor.

It localises to the cytoplasm. The catalysed reaction is L-aspartate(89)-[ribosomal protein uS12]-hydrogen + (sulfur carrier)-SH + AH2 + 2 S-adenosyl-L-methionine = 3-methylsulfanyl-L-aspartate(89)-[ribosomal protein uS12]-hydrogen + (sulfur carrier)-H + 5'-deoxyadenosine + L-methionine + A + S-adenosyl-L-homocysteine + 2 H(+). Its function is as follows. Catalyzes the methylthiolation of an aspartic acid residue of ribosomal protein uS12. The chain is Ribosomal protein uS12 methylthiotransferase RimO from Acaryochloris marina (strain MBIC 11017).